We begin with the raw amino-acid sequence, 243 residues long: 1-(5-phosphoribosyl)-5-[(5-phosphoribosylamino)methylideneamino] imidazole-4-carboxamide isomerase (243 aa).

Asp-8 acts as the Proton acceptor in catalysis. Catalysis depends on Asp-130, which acts as the Proton donor.

The protein belongs to the HisA/HisF family.

It is found in the cytoplasm. The enzyme catalyses 1-(5-phospho-beta-D-ribosyl)-5-[(5-phospho-beta-D-ribosylamino)methylideneamino]imidazole-4-carboxamide = 5-[(5-phospho-1-deoxy-D-ribulos-1-ylimino)methylamino]-1-(5-phospho-beta-D-ribosyl)imidazole-4-carboxamide. Its pathway is amino-acid biosynthesis; L-histidine biosynthesis; L-histidine from 5-phospho-alpha-D-ribose 1-diphosphate: step 4/9. The sequence is that of 1-(5-phosphoribosyl)-5-[(5-phosphoribosylamino)methylideneamino] imidazole-4-carboxamide isomerase from Ruthia magnifica subsp. Calyptogena magnifica.